The chain runs to 335 residues: Phosphate acyltransferase (335 aa).

Belongs to the PlsX family. As to quaternary structure, homodimer. Probably interacts with PlsY.

The protein localises to the cytoplasm. It carries out the reaction a fatty acyl-[ACP] + phosphate = an acyl phosphate + holo-[ACP]. It participates in lipid metabolism; phospholipid metabolism. In terms of biological role, catalyzes the reversible formation of acyl-phosphate (acyl-PO(4)) from acyl-[acyl-carrier-protein] (acyl-ACP). This enzyme utilizes acyl-ACP as fatty acyl donor, but not acyl-CoA. In Streptococcus equi subsp. zooepidemicus (strain H70), this protein is Phosphate acyltransferase.